Here is a 927-residue protein sequence, read N- to C-terminus: Probable dipeptidyl-aminopeptidase B (927 aa).

2 disordered regions span residues Met1 to Ile44 and Gly58 to Gly101. The Cytoplasmic portion of the chain corresponds to Met1 to Arg108. Basic and acidic residues-rich tracts occupy residues His19 to Glu36 and Gly58 to Glu70. The chain crosses the membrane as a helical; Signal-anchor for type II membrane protein span at residues Thr109 to Val129. Topologically, residues Ser130–Leu927 are vacuolar. 2 N-linked (GlcNAc...) asparagine glycosylation sites follow: Asn365 and Asn530. Ser769 functions as the Charge relay system in the catalytic mechanism. Residue Asn828 is glycosylated (N-linked (GlcNAc...) asparagine). Catalysis depends on charge relay system residues Asp846 and His879.

It belongs to the peptidase S9B family.

It is found in the vacuole membrane. The enzyme catalyses Release of an N-terminal dipeptide, Xaa-Yaa-|-Zaa-, from a polypeptide, preferentially when Yaa is Pro, provided Zaa is neither Pro nor hydroxyproline.. Type IV dipeptidyl-peptidase which removes N-terminal dipeptides sequentially from polypeptides having unsubstituted N-termini provided that the penultimate residue is proline. The protein is Probable dipeptidyl-aminopeptidase B (DAPB) of Podospora anserina (strain S / ATCC MYA-4624 / DSM 980 / FGSC 10383) (Pleurage anserina).